Consider the following 218-residue polypeptide: Putative glutamine transport system permease protein GlnP (218 aa).

An ABC transmembrane type-1 domain is found at 19 to 208 (TLVTLKYSVI…ILVILISFIA (190 aa)). Helical transmembrane passes span 25 to 45 (YSVI…ICKV), 57 to 79 (FYTS…FAAP), 86 to 108 (FNVF…SEVI), and 187 to 207 (FFPM…ISFI).

It belongs to the binding-protein-dependent transport system permease family. HisMQ subfamily.

It localises to the cell inner membrane. Functionally, part of the binding-protein-dependent transport system for glutamine; probably responsible for the translocation of the substrate across the membrane. The polypeptide is Putative glutamine transport system permease protein GlnP (glnP) (Rickettsia prowazekii (strain Madrid E)).